Here is a 1071-residue protein sequence, read N- to C-terminus: DNA-directed RNA polymerase subunit beta (1071 aa).

The protein belongs to the RNA polymerase beta chain family. In plastids the minimal PEP RNA polymerase catalytic core is composed of four subunits: alpha, beta, beta', and beta''. When a (nuclear-encoded) sigma factor is associated with the core the holoenzyme is formed, which can initiate transcription.

Its subcellular location is the plastid. It localises to the chloroplast. It catalyses the reaction RNA(n) + a ribonucleoside 5'-triphosphate = RNA(n+1) + diphosphate. DNA-dependent RNA polymerase catalyzes the transcription of DNA into RNA using the four ribonucleoside triphosphates as substrates. The protein is DNA-directed RNA polymerase subunit beta of Adiantum capillus-veneris (Maidenhair fern).